Here is a 1027-residue protein sequence, read N- to C-terminus: 2-oxoglutarate dehydrogenase, mitochondrial (1027 aa).

Positions 315, 413, 446, 448, and 674 each coordinate thiamine diphosphate. The Mg(2+) site is built by D413, N446, and I448.

Belongs to the alpha-ketoglutarate dehydrogenase family. Homodimer. Component of the 2-oxoglutarate dehydrogenase complex. The cofactor is thiamine diphosphate. Mg(2+) serves as cofactor.

It localises to the mitochondrion matrix. The catalysed reaction is N(6)-[(R)-lipoyl]-L-lysyl-[protein] + 2-oxoglutarate + H(+) = N(6)-[(R)-S(8)-succinyldihydrolipoyl]-L-lysyl-[protein] + CO2. Its function is as follows. The 2-oxoglutarate dehydrogenase complex catalyzes the overall conversion of 2-oxoglutarate to succinyl-CoA and CO(2). It contains multiple copies of three enzymatic components: 2-oxoglutarate dehydrogenase (E1), dihydrolipoamide succinyltransferase (E2) and lipoamide dehydrogenase (E3). The sequence is that of 2-oxoglutarate dehydrogenase, mitochondrial (ogdh-1) from Caenorhabditis briggsae.